Here is a 127-residue protein sequence, read N- to C-terminus: Glycine cleavage system H protein (127 aa).

Residues 22–104 (NVRIGITDYA…YDKAWMIVVK (83 aa)) form the Lipoyl-binding domain. At lysine 63 the chain carries N6-lipoyllysine.

It belongs to the GcvH family. The glycine cleavage system is composed of four proteins: P, T, L and H. It depends on (R)-lipoate as a cofactor.

In terms of biological role, the glycine cleavage system catalyzes the degradation of glycine. The H protein shuttles the methylamine group of glycine from the P protein to the T protein. Is also involved in protein lipoylation via its role as an octanoyl/lipoyl carrier protein intermediate. The sequence is that of Glycine cleavage system H protein from Geobacillus kaustophilus (strain HTA426).